Consider the following 217-residue polypeptide: MSSEPTPSPICPPGFVKVDITIPPYYVCAPTRAVTTTTRPVVTTNCYTAYAPTIIIYNTQLPLVYQVVAFTFDIYNTPVKVPKYVLTKKARRKGAELIEVNASTILDALSRLLVISTENSFGRVPVASVKVSKVFSPLCPRSYVLLKIVGTVTVRAVIRPVAISGSDAVLTTFVSAGILGNIHTPTRATSFQVVEVPVQFITSPEQLTAFIQTLTGK.

This is an uncharacterized protein from Acidianus sp. F28 (AFV-2).